A 966-amino-acid polypeptide reads, in one-letter code: Serine/threonine-protein kinase 10 (966 aa).

Ser-13 and Ser-20 each carry phosphoserine. Positions 36–294 (WEIVGELGDG…AAQLLQHPFV (259 aa)) constitute a Protein kinase domain. ATP contacts are provided by residues 42 to 50 (LGDGAFGKV) and Lys-65. The Proton acceptor role is filled by Asp-157. The activation segment stretch occupies residues 175–224 (DFGVSAKNLKTLQKRDSFIGTPYWMAPEVVLCETMKDAPYDYKADIWSLG). Thr-185 carries the post-translational modification Phosphothreonine; by autocatalysis. The residue at position 191 (Ser-191) is a Phosphoserine. Composition is skewed to polar residues over residues 341-363 (TQDS…DSST) and 371-392 (QEPV…TTSP). Residues 341-497 (TQDSANVTQP…NLSTSESMDY (157 aa)) form a disordered region. Over residues 421–430 (IQMDEEKQIP) the composition is skewed to basic and acidic residues. 4 positions are modified to phosphoserine: Ser-437, Ser-449, Ser-453, and Ser-484. A compositionally biased stretch (polar residues) spans 438-456 (PAASKSQKANQSRPNSSAL). The segment covering 485–497 (DCSNLSTSESMDY) has biased composition (polar residues). 2 positions are modified to phosphoserine: Ser-513 and Ser-548. Residues 588–936 (LQLEQMHKRF…LNQKKREQEM (349 aa)) adopt a coiled-coil conformation. Disordered stretches follow at residues 660-692 (KKEV…KKQR), 826-865 (INGA…ENQM), and 901-966 (LDES…GDAS). Basic and acidic residues-rich tracts occupy residues 834–865 (EQRE…ENQM) and 901–946 (LDES…EAEP). Thr-950 carries the phosphothreonine modification. The span at 950–966 (TPSKASNFFPYSSGDAS) shows a compositional bias: polar residues.

It belongs to the protein kinase superfamily. STE Ser/Thr protein kinase family. STE20 subfamily. In terms of assembly, homodimer; homodimerization is required for activation segment autophosphorylation. Post-translationally, autophosphorylates following homodimerization, leading to activation of the protein. Expressed predominantly in lymphoid organs such as spleen, thymus, and bone marrow.

Its subcellular location is the cell membrane. It carries out the reaction L-seryl-[protein] + ATP = O-phospho-L-seryl-[protein] + ADP + H(+). The enzyme catalyses L-threonyl-[protein] + ATP = O-phospho-L-threonyl-[protein] + ADP + H(+). With respect to regulation, inhibited by the pyrrole-indolinone inhibitor SU11274 (K00593): intercalates between the ATP-binding Lys-65 and alpha-C glutamate (Glu-81), resulting in a partial disordering of the lysine side chain. Also specifically inhibited by erlotinib. Slightly inhibited by gefitinib. In terms of biological role, serine/threonine-protein kinase involved in regulation of lymphocyte migration. Phosphorylates MSN, and possibly PLK1. Involved in regulation of lymphocyte migration by mediating phosphorylation of ERM proteins such as MSN. Acts as a negative regulator of MAP3K1/MEKK1. May also act as a cell cycle regulator by acting as a polo kinase kinase: mediates phosphorylation of PLK1 in vitro; however such data require additional evidences in vivo. This Mus musculus (Mouse) protein is Serine/threonine-protein kinase 10 (Stk10).